The following is a 396-amino-acid chain: Phosphoglycerate kinase (396 aa).

Residues 24–26 (DFN), Arg-39, 62–65 (HLGR), Arg-120, and Arg-153 each bind substrate. Residues Lys-203, Gly-294, Glu-325, and 352–355 (GGDS) each bind ATP.

Belongs to the phosphoglycerate kinase family. Monomer.

It is found in the cytoplasm. It catalyses the reaction (2R)-3-phosphoglycerate + ATP = (2R)-3-phospho-glyceroyl phosphate + ADP. Its pathway is carbohydrate degradation; glycolysis; pyruvate from D-glyceraldehyde 3-phosphate: step 2/5. The polypeptide is Phosphoglycerate kinase (Dictyoglomus turgidum (strain DSM 6724 / Z-1310)).